The chain runs to 481 residues: Proline--tRNA ligase (481 aa).

The protein belongs to the class-II aminoacyl-tRNA synthetase family. ProS type 3 subfamily. Homodimer.

The protein resides in the cytoplasm. It carries out the reaction tRNA(Pro) + L-proline + ATP = L-prolyl-tRNA(Pro) + AMP + diphosphate. Functionally, catalyzes the attachment of proline to tRNA(Pro) in a two-step reaction: proline is first activated by ATP to form Pro-AMP and then transferred to the acceptor end of tRNA(Pro). This is Proline--tRNA ligase from Chlorobium phaeobacteroides (strain BS1).